A 921-amino-acid polypeptide reads, in one-letter code: Protein translocase subunit SecA (921 aa).

Residues Q86, 104-108, and D497 contribute to the ATP site; that span reads GEGKT. Residues 829–838 show a composition bias toward low complexity; that stretch reads QQAPQQQPQQ. Positions 829–921 are disordered; it reads QQAPQQQPQQ…CHGAIETQKA (93 aa). The span at 839-855 shows a compositional bias: pro residues; sequence VAPPPRPQPPQPAPQPP. Zn(2+) is bound by residues C901, C903, C912, and H913.

Belongs to the SecA family. As to quaternary structure, monomer and homodimer. Part of the essential Sec protein translocation apparatus which comprises SecA, SecYEG and auxiliary proteins SecDF-YajC and YidC. Zn(2+) is required as a cofactor.

The protein resides in the cell inner membrane. The protein localises to the cytoplasm. The catalysed reaction is ATP + H2O + cellular proteinSide 1 = ADP + phosphate + cellular proteinSide 2.. Part of the Sec protein translocase complex. Interacts with the SecYEG preprotein conducting channel. Has a central role in coupling the hydrolysis of ATP to the transfer of proteins into and across the cell membrane, serving both as a receptor for the preprotein-SecB complex and as an ATP-driven molecular motor driving the stepwise translocation of polypeptide chains across the membrane. The sequence is that of Protein translocase subunit SecA from Hyphomonas neptunium (strain ATCC 15444).